Consider the following 1462-residue polypeptide: Gag-Pro-Pol polyprotein (1462 aa).

The N-myristoyl glycine; by host moiety is linked to residue Gly2. The interval 93–144 is disordered; sequence QIPSRPAPPPPSSPTHDPPDSDPQIPPPYVEPTAPQVLPVMHPHGAPPNHRP. Position 105 is a phosphoserine; by host MAPK1 (Ser105). Residues 118–121 carry the PPXY motif motif; the sequence is PPPY. The PTAP/PSAP motif motif lies at 124–127; sequence PTAP. CCHC-type zinc fingers lie at residues 355-372 and 378-395; these read QPCF…DCTQ and GPCP…DCPR. A Peptidase A2 domain is found at 476–554; it reads IEALLDTGAD…NNWAIIGRDA (79 aa). Asp481 serves as the catalytic For protease activity; shared with dimeric partner. The Reverse transcriptase domain occupies 614-804; the sequence is LEAGHIEPYT…GTIKFLGQII (191 aa). Asp680, Asp755, Asp756, Asp1040, Glu1074, Asp1096, Asp1157, Asp1230, and Asp1287 together coordinate Mg(2+). Positions 1031–1165 constitute an RNase H type-1 domain; it reads INTAPCLFSD…TDALLITPVL (135 aa). Residues 1219-1388 enclose the Integrase catalytic domain; the sequence is RGLLPNHIWQ…QPIPETRSLS (170 aa). The integrase-type DNA-binding region spans 1393–1443; that stretch reads HWYYFKLPGLNSRQWKGPQEALQEAAGAALIPVSASSAQWIPWRLLKRAAC.

As to quaternary structure, homodimer; the homodimers are part of the immature particles. Interacts with human TSG101 and NEDD4; these interactions are essential for budding and release of viral particles. Homodimer; further assembles as homohexamers. The cofactor is Mg(2+). Post-translationally, phosphorylation of the matrix protein p19 by MAPK1 seems to play a role in budding. Myristoylated. Myristoylation of the matrix (MA) domain mediates the transport and binding of Gag polyproteins to the host plasma membrane and is required for the assembly of viral particles. In terms of processing, specific enzymatic cleavages by the viral protease yield mature proteins. The polyprotein is cleaved during and after budding, this process is termed maturation. The protease is autoproteolytically processed at its N- and C-termini.

The protein localises to the virion. The enzyme catalyses Endonucleolytic cleavage to 5'-phosphomonoester.. The catalysed reaction is DNA(n) + a 2'-deoxyribonucleoside 5'-triphosphate = DNA(n+1) + diphosphate. Its function is as follows. The matrix domain targets Gag, Gag-Pro and Gag-Pro-Pol polyproteins to the plasma membrane via a multipartite membrane binding signal, that includes its myristoylated N-terminus. Functionally, matrix protein. In terms of biological role, forms the spherical core of the virus that encapsulates the genomic RNA-nucleocapsid complex. Binds strongly to viral nucleic acids and promote their aggregation. Also destabilizes the nucleic acids duplexes via highly structured zinc-binding motifs. Its function is as follows. The aspartyl protease mediates proteolytic cleavages of Gag and Gag-Pol polyproteins during or shortly after the release of the virion from the plasma membrane. Cleavages take place as an ordered, step-wise cascade to yield mature proteins. This process is called maturation. Displays maximal activity during the budding process just prior to particle release from the cell. Cleaves the translation initiation factor eIF4G leading to the inhibition of host cap-dependent translation. Functionally, RT is a multifunctional enzyme that converts the viral RNA genome into dsDNA in the cytoplasm, shortly after virus entry into the cell. This enzyme displays a DNA polymerase activity that can copy either DNA or RNA templates, and a ribonuclease H (RNase H) activity that cleaves the RNA strand of RNA-DNA heteroduplexes in a partially processive 3' to 5'-endonucleasic mode. Conversion of viral genomic RNA into dsDNA requires many steps. A tRNA-Pro binds to the primer-binding site (PBS) situated at the 5'-end of the viral RNA. RT uses the 3' end of the tRNA primer to perform a short round of RNA-dependent minus-strand DNA synthesis. The reading proceeds through the U5 region and ends after the repeated (R) region which is present at both ends of viral RNA. The portion of the RNA-DNA heteroduplex is digested by the RNase H, resulting in a ssDNA product attached to the tRNA primer. This ssDNA/tRNA hybridizes with the identical R region situated at the 3' end of viral RNA. This template exchange, known as minus-strand DNA strong stop transfer, can be either intra- or intermolecular. RT uses the 3' end of this newly synthesized short ssDNA to perform the RNA-dependent minus-strand DNA synthesis of the whole template. RNase H digests the RNA template except for a polypurine tract (PPT) situated at the 5' end of the genome. It is not clear if both polymerase and RNase H activities are simultaneous. RNase H probably can proceed both in a polymerase-dependent (RNA cut into small fragments by the same RT performing DNA synthesis) and a polymerase-independent mode (cleavage of remaining RNA fragments by free RTs). Secondly, RT performs DNA-directed plus-strand DNA synthesis using the PPT that has not been removed by RNase H as primer. PPT and tRNA primers are then removed by RNase H. The 3' and 5' ssDNA PBS regions hybridize to form a circular dsDNA intermediate. Strand displacement synthesis by RT to the PBS and PPT ends produces a blunt ended, linear dsDNA copy of the viral genome that includes long terminal repeats (LTRs) at both ends. In terms of biological role, catalyzes viral DNA integration into the host chromosome, by performing a series of DNA cutting and joining reactions. This Homo sapiens (Human) protein is Gag-Pro-Pol polyprotein (gag-pro-pol).